We begin with the raw amino-acid sequence, 387 residues long: Cyclin-B1-4 (387 aa).

The segment at 1-29 is disordered; sequence MASSRVSDLPHQRGIAGEIKPKNVAGHGR.

Belongs to the cyclin family. Cyclin AB subfamily.

The sequence is that of Cyclin-B1-4 (CYCB1-4) from Arabidopsis thaliana (Mouse-ear cress).